We begin with the raw amino-acid sequence, 466 residues long: Soluble pyridine nucleotide transhydrogenase (466 aa).

Residue 36–45 (ERYQNVGGGC) coordinates FAD.

The protein belongs to the class-I pyridine nucleotide-disulfide oxidoreductase family. FAD serves as cofactor.

The protein resides in the cytoplasm. It catalyses the reaction NAD(+) + NADPH = NADH + NADP(+). In terms of biological role, conversion of NADPH, generated by peripheral catabolic pathways, to NADH, which can enter the respiratory chain for energy generation. The protein is Soluble pyridine nucleotide transhydrogenase of Escherichia coli O127:H6 (strain E2348/69 / EPEC).